The sequence spans 350 residues: DNA primase small subunit PriS (350 aa).

Active-site residues include Asp-97, Asp-99, and Asp-251.

The protein belongs to the eukaryotic-type primase small subunit family. Heterodimer of a small subunit (PriS) and a large subunit (PriL). Requires Mg(2+) as cofactor. It depends on Mn(2+) as a cofactor. Zn(2+) serves as cofactor.

Catalytic subunit of DNA primase, an RNA polymerase that catalyzes the synthesis of short RNA molecules used as primers for DNA polymerase during DNA replication. The small subunit contains the primase catalytic core and has DNA synthesis activity on its own. Binding to the large subunit stabilizes and modulates the activity, increasing the rate of DNA synthesis while decreasing the length of the DNA fragments, and conferring RNA synthesis capability. The DNA polymerase activity may enable DNA primase to also catalyze primer extension after primer synthesis. May also play a role in DNA repair. The polypeptide is DNA primase small subunit PriS (Methanocaldococcus jannaschii (strain ATCC 43067 / DSM 2661 / JAL-1 / JCM 10045 / NBRC 100440) (Methanococcus jannaschii)).